Consider the following 53-residue polypeptide: Snake venom serine protease LmrSP-4 (53 aa).

C26 and C42 are joined by a disulfide. H41 functions as the Charge relay system in the catalytic mechanism.

As to quaternary structure, monomer. In terms of processing, N-glycosylated. Expressed by the venom gland.

It is found in the secreted. Its activity is regulated as follows. Inhibited by the small molecule serine protease inhibitors phenylmethylsulfonyl fluoride (PMSF) and benzamidine. Functionally, snake venom serine protease that has fibrinogenolytic activity. Hydrolyzes the alpha-chain of fibrinogen (FGA), without affecting the beta- and the gamma-chains. Also displays hydrolytic activity towards S-2302 (plasma kallikrein substrate) and S-2251 (substrate for plasmin), but has no hydrolytic activity with S-2238 (thrombin substrate) or S-2222 (factor Xa). The sequence is that of Snake venom serine protease LmrSP-4 from Lachesis muta rhombeata (Bushmaster).